We begin with the raw amino-acid sequence, 766 residues long: MYLVKSAGSPIYRTLRTLTTSNLMAATIASAKDPLTGPRYEREPNVLRKKLASVVPGTVNLQVLGSGANGAPAAVYLFTDQARYLFNCGEGTQRLAHEHKTRLSRLEQIFLTQNTWASCGGLPGLTLTIQDAGVRDIGLHGPPHLGSMLQSMRRFVVLKNLQVRPNDCSEGACFEDSILKVDSLPLINSEDPTKSVINYICQLKPRAGALNLVKCVEQGVPPGPLLGQLKNGNDITLPDGKVVRSVDVTEASETALSFVFLDVPSENYLPALLTHGKRLKKLGEEKLTEVALVVHFTPYHISSRQVYKDFVVESFSSEAQHIYLSSPLNQFSGYAAAHRIQHQLHQLAPQVFPLLGEQLSCQSQTLSLNLKKTKLDEADSEDKANAKANETEEQGVVAMTNYHLRPRKGLDRTLESKLTPEEYVKETHAVPGFLELLAKFKEEYSFPDNSADSYPKIIFLGTGSCIPNKTRNVSSILIRTAIDAYVLLDCGEGTYGQIVRLYGHEKGQLILRQLQAIYVSHLHADHHIGLIGLLRERRQLKPRADPLILLAPRQIEPWLEFYNRQIETVEDAYTLVGNGELLASPLSGEQVERLGITSISTCLVRHCPNSFGISLTLAAKHNSEPVKITYSGDTMPCQDLIDLGRDSTVLIHEATMEDDLEEEARLKTHSTVSQAIQQGRNMNARHTILTHFSQRYAKCPRLPSDEDMQRVAIAFDNMEVTIEDLQHYHKLYPALFAMYAEYTEELEQRAVKRELKQERKRKLAET.

A mitochondrion-targeting transit peptide spans 1–25 (MYLVKSAGSPIYRTLRTLTTSNLMA).

The protein belongs to the RNase Z family. In terms of assembly, homodimer. It depends on Zn(2+) as a cofactor.

Its subcellular location is the nucleus. The protein resides in the mitochondrion. The enzyme catalyses Endonucleolytic cleavage of RNA, removing extra 3' nucleotides from tRNA precursor, generating 3' termini of tRNAs. A 3'-hydroxy group is left at the tRNA terminus and a 5'-phosphoryl group is left at the trailer molecule.. Its function is as follows. Zinc phosphodiesterase, which displays some tRNA 3'-processing endonuclease activity of nuclear and mitochondrial pre-tRNA. Probably involved in tRNA maturation, by removing a 3'-trailer from precursor tRNA. May participate in tRNA processing in the developing embryo. The sequence is that of Ribonuclease Z, mitochondrial from Drosophila melanogaster (Fruit fly).